The following is a 222-amino-acid chain: Collectrin (222 aa).

The signal sequence occupies residues 1 to 14 (MLWALFFLVTTIHA). Over 15 to 141 (ELCHPDAENA…LAPPMEPSVP (127 aa)) the chain is Extracellular. Residues 21–222 (AENAFKVRLS…LTEDERLTPL (202 aa)) enclose the Collectrin-like domain. Residues asparagine 76 and asparagine 93 are each glycosylated (N-linked (GlcNAc...) asparagine). A helical transmembrane segment spans residues 142–162 (VWIIVFGVIFCIVTVAIALLV). The Cytoplasmic portion of the chain corresponds to 163-222 (LSGIRQRRRNNKGPPGVEDAEDKCENIITIENGIPCDPLDMKGGHINDGFLTEDERLTPL). 2 positions are modified to phosphothreonine: threonine 214 and threonine 220.

Belongs to the CLTRN family. Monomer. Homodimer. Homodimer; dimerization prevents CLTRN cleavage by BACE2. Interacts with SNAPIN. Interacts with SLC6A18; this interaction regulates the trafficking of SLC6A18 to the cell membrane and its amino acid transporter activity. Interacts with SLC6A19; this interaction regulates the trafficking of SLC6A19 to the cell membrane and its amino acid transporter activity. Interacts with SLC6A20B. Glycosylated. Glycosylation is required for plasma membrane localization and for its cleavage by BACE2. In terms of processing, proteolytically processed in pancreatic beta cells by BACE2 leading to the generation and extracellular release of soluble CLTRN, and a corresponding cell-associated C-terminal fragment which is later cleaved by gamma-secretase. This shedding process inactivates CLTRN. Three cleavage sites have been identified for BACE2, two clustered sites after Phe-116 and Leu-118 and a more membrane proximal site at Phe-125; the preferred BACE2 cleavage site seems to be between Phe-125 and Leu-126, Phe-116 and Leu-118 act as alternative sites. Expressed on the apical surface of the proximal tubules in the renal cortex (at protein level). Kidney; collecting ducts and proximal tubule. Pancreas; beta cells of islets. Expressed in the cerebral cortex, hippocampus, brainstem and cerebellum.

It localises to the cell membrane. In terms of biological role, plays an important role in amino acid transport by acting as binding partner of amino acid transporters SLC6A18 and SLC6A19, regulating their trafficking on the cell surface and their activity. May also play a role in trafficking of amino acid transporters SLC3A1 and SLC7A9 to the renal cortical cell membrane. Regulator of SNARE complex function. Stimulator of beta cell replication. The protein is Collectrin of Mus musculus (Mouse).